Reading from the N-terminus, the 704-residue chain is Metabotropic glutamate receptor-like protein K (704 aa).

The N-terminal stretch at 1-21 (MIKLILSIILIICFIINSIES) is a signal peptide. Residues 22 to 383 (FKMITLTTGP…SKVEFQRSIQ (362 aa)) lie on the Extracellular side of the membrane. N-linked (GlcNAc...) asparagine glycosylation is found at asparagine 66, asparagine 104, asparagine 256, asparagine 286, asparagine 308, asparagine 337, asparagine 343, and asparagine 368. The chain crosses the membrane as a helical span at residues 384 to 404 (IGFSIVSGLLIGFVILMMIGI). Topologically, residues 405 to 419 (VKYQDTPSIRSASPS) are cytoplasmic. Residues 420-440 (FLNLTLLGGVIIFIGIIVWVA) traverse the membrane as a helical segment. Residues 441–455 (PISTHQCNARFWLVT) lie on the Extracellular side of the membrane. The chain crosses the membrane as a helical span at residues 456–476 (IGFSTLIGSLVVKNIRIWLIF). Topologically, residues 477–492 (DNPELKIRTITNNQLY) are cytoplasmic. Residues 493–513 (PWVGLCLVINIVLMSIITTVG) traverse the membrane as a helical segment. At 514-541 (DLKAIEAQGIDSLGKFEYMTICKMNYTG) the chain is on the extracellular side. N-linked (GlcNAc...) asparagine glycosylation is present at asparagine 538. The chain crosses the membrane as a helical span at residues 542–562 (AATLYSILAYFGTLLLVGVFV). Topologically, residues 563–578 (SWKIRIVHIEEFSECT) are cytoplasmic. A helical membrane pass occupies residues 579-599 (AIAKTLYSISFCLFVIVPLMI). The Extracellular portion of the chain corresponds to 600–608 (SPQDKQSET). Residues 609–629 (IILCVTGIFITTGALLIFFLP) form a helical membrane-spanning segment. Residues 630-704 (KFWRIFGNEK…NESSLSNETK (75 aa)) are Cytoplasmic-facing. Disordered regions lie at residues 657–677 (ARAESANRNNSSNSFGFSKSS) and 685–704 (SGIESLNDDSNESSLSNETK).

The protein in the N-terminal section; belongs to the BMP lipoprotein family. In the C-terminal section; belongs to the G-protein coupled receptor 3 family. GABA-B receptor subfamily.

The protein resides in the membrane. In Dictyostelium discoideum (Social amoeba), this protein is Metabotropic glutamate receptor-like protein K (grlK).